Consider the following 492-residue polypeptide: GlcNAc-binding protein A (492 aa).

The N-terminal stretch at 1–23 is a signal peptide; the sequence is MNKSSTKTLIALSMMAVSSGVSA. The 181-residue stretch at 24 to 204 folds into the Chitin-binding type-4 domain; that stretch reads HGYVSETNDG…AFYNVIDVKF (181 aa). Residues 443–484 form the Chitin-binding type-3 domain; the sequence is AGTKVLAEDSNVYQCKEFPYSGYCVQWTETATNFAPGVGSDW.

It belongs to the GbpA family.

The protein localises to the secreted. Probably interacts with GlcNAc residues. May promote attachment to both epithelial cell surfaces and chitin. This chain is GlcNAc-binding protein A, found in Aliivibrio fischeri (strain MJ11) (Vibrio fischeri).